The primary structure comprises 410 residues: Interleukin-1 receptor type 2 (410 aa).

An N-terminal signal peptide occupies residues 1 to 13 (MFILLVLVTGVSA). The Extracellular segment spans residues 14-355 (FTTPTVVHTG…SQSLHTTVKE (342 aa)). Ig-like C2-type domains are found at residues 35-136 (PTVH…VELK), 146-237 (PHVS…RNIE), and 249-357 (PVII…KEVS). Cystine bridges form between Cys-42-Cys-128, Cys-64-Cys-120, and Cys-164-Cys-219. Asn-124, Asn-208, Asn-231, and Asn-289 each carry an N-linked (GlcNAc...) asparagine glycan. A disulfide bridge links Cys-270 with Cys-338. Residues 356–381 (VSSTFSWSIALAPLSLIILVVGAIWM) traverse the membrane as a helical segment. Residues 382–410 (RRRCKRRAGKTYGLTKLRTDNQDFPSSPN) lie on the Cytoplasmic side of the membrane.

It belongs to the interleukin-1 receptor family. In terms of assembly, associates with IL1RAP to form a non-signaling interleukin-1 receptor complex. Post-translationally, a soluble form (sIL1R2) can also be produced by proteolytic cleavage at the cell surface (shedding) involving a metalloproteinase. In terms of tissue distribution, strongly expressed in B-cells, with levels 21 times higher than IL1R1. In T-cells expressed 5 times more compared with IL1R1.

The protein resides in the membrane. The protein localises to the cell membrane. It localises to the secreted. Its function is as follows. Non-signaling receptor for IL1A, IL1B and IL1RN. Reduces IL1B activities. Serves as a decoy receptor by competitive binding to IL1B and preventing its binding to IL1R1. Also modulates cellular response through non-signaling association with IL1RAP after binding to IL1B. IL1R2 (membrane and secreted forms) preferentially binds IL1B and poorly IL1A and IL1RN. The secreted IL1R2 recruits secreted IL1RAP with high affinity; this complex formation may be the dominant mechanism for neutralization of IL1B by secreted/soluble receptors. The polypeptide is Interleukin-1 receptor type 2 (Il1r2) (Mus musculus (Mouse)).